We begin with the raw amino-acid sequence, 331 residues long: Myc-associated zinc finger protein (331 aa).

Disordered stretches follow at residues 46–65 (AQSPFQAAPAPPPTPQAPAA) and 108–131 (TVDTAALKQPPAPPPPPPAVSAPA). Residues 117–127 (PPAPPPPPPAV) show a composition bias toward pro residues. 4 consecutive C2H2-type zinc fingers follow at residues 177–199 (YICALCAKEFKNGYNLRRHEAIH), 266–288 (HACEMCGKAFRDVYHLNRHKLSH), 294–316 (YQCPVCQQRFKRKDRMSYHVRSH), and 324–331 (YNCSHCGK).

Interacts with BPTF. As to expression, ubiquitously expressed.

Its subcellular location is the nucleus. In terms of biological role, transcriptional regulator. Acts as a transcriptional activator that binds to purine-rich GAGA sites found in the promoter of many genes including insulin I and II and islet amyloid polypeptide. In Mesocricetus auratus (Golden hamster), this protein is Myc-associated zinc finger protein (MAZ).